The following is a 515-amino-acid chain: Leucine-rich repeat transmembrane neuronal protein 2 (515 aa).

Positions 1-33 are cleaved as a signal peptide; that stretch reads MGLHFKWPLGAPMLAAIYAMSVVLKMLPALGMA. The Extracellular portion of the chain corresponds to 34–421; the sequence is CPPKCRCEKL…EPDNAIFTQR (388 aa). The N-linked (GlcNAc...) asparagine glycan is linked to Asn57. LRR repeat units follow at residues 61–83, 84–107, 109–131, 132–155, 156–179, 181–203, 205–227, 229–251, 252–275, and 276–299; these read KGSL…QFAS, FSQL…AFQG, YKLK…TFTQ, LINL…LFYG, LRKL…LFWD, RSLE…GFAG, IKLR…HFLR, SSLH…MEWT, WSTL…VFET, and MPNL…ILSS. Asn126 carries N-linked (GlcNAc...) asparagine glycosylation. N-linked (GlcNAc...) asparagine glycosylation is present at Asn243. Asn362 carries N-linked (GlcNAc...) asparagine glycosylation. Residues 422–442 traverse the membrane as a helical segment; that stretch reads VITGTMALLFSFFFIIFIVFI. Residues 443-515 are Cytoplasmic-facing; the sequence is SRKCCPPTLR…QQLPYKECEV (73 aa). The short motif at 512-515 is the Involved in DLG4-binding element; that stretch reads ECEV.

The protein belongs to the LRRTM family. Interacts with DLG4. Interacts with neurexin NRXN1; interaction is mediated by heparan sulfate glycan modification on neurexin. As to expression, expressed in neuronal tissues. Widely distributed in neuropil regions in discrete puncta throughout the brain (at protein level). Detected in cortex, thalamus, striatum, olfactory bulb, cerebellum and all hippocampal subfields (at protein level). More abundant in deep than in superficial layers of neocortex (at protein level).

It is found in the cell membrane. It localises to the postsynaptic cell membrane. Functionally, involved in the development and maintenance of excitatory synapses in the nervous system. Regulates surface expression of AMPA receptors and instructs the development of functional glutamate release sites. Acts as a ligand for the presynaptic receptors NRXN1-A and NRXN1-B. In Rattus norvegicus (Rat), this protein is Leucine-rich repeat transmembrane neuronal protein 2 (Lrrtm2).